A 928-amino-acid chain; its full sequence is DENN domain-containing protein 2C (928 aa).

2 disordered regions span residues 67 to 105 (KSKN…YDDT) and 245 to 266 (QSSL…IRGR). Basic and acidic residues predominate over residues 85–105 (ENTKSHDQSENENKKHEYDDT). S271 is subject to Phosphoserine. Residues 428–456 (KLHSYTGKELPPTKGETSGNESDAEYLPK) form a disordered region. The region spanning 492-641 (ELFVVVSLQK…PFPAPGRTIT (150 aa)) is the uDENN domain. In terms of domain architecture, cDENN spans 663–796 (RLEHVDFKCL…LQAALMQILE (134 aa)). One can recognise a dDENN domain in the interval 798-888 (RNEILTQEQN…QDRELRKSGV (91 aa)).

Functionally, guanine nucleotide exchange factor (GEF) which may activate RAB9A and RAB9B. Promotes the exchange of GDP to GTP, converting inactive GDP-bound Rab proteins into their active GTP-bound form. The chain is DENN domain-containing protein 2C (DENND2C) from Homo sapiens (Human).